A 103-amino-acid polypeptide reads, in one-letter code: Large ribosomal subunit protein uL23 (103 aa).

It belongs to the universal ribosomal protein uL23 family. As to quaternary structure, part of the 50S ribosomal subunit. Contacts protein L29, and trigger factor when it is bound to the ribosome.

In terms of biological role, one of the early assembly proteins it binds 23S rRNA. One of the proteins that surrounds the polypeptide exit tunnel on the outside of the ribosome. Forms the main docking site for trigger factor binding to the ribosome. In Chlorobium phaeovibrioides (strain DSM 265 / 1930) (Prosthecochloris vibrioformis (strain DSM 265)), this protein is Large ribosomal subunit protein uL23.